The sequence spans 56 residues: Protein hunchback (56 aa).

3 consecutive C2H2-type zinc fingers follow at residues H1–H5, F11–H33, and F39–L56.

Belongs to the hunchback C2H2-type zinc-finger protein family.

It localises to the nucleus. Gap class segmentation protein that controls development of head structures. This is Protein hunchback (hb) from Euscelis plebejus (Leafhopper).